The chain runs to 96 residues: UPF0235 protein YpsIP31758_0827 (96 aa).

Belongs to the UPF0235 family.

This is UPF0235 protein YpsIP31758_0827 from Yersinia pseudotuberculosis serotype O:1b (strain IP 31758).